Consider the following 216-residue polypeptide: Peptide deformylase 1 (216 aa).

Fe cation is bound by residues cysteine 135 and histidine 177. Residue glutamate 178 is part of the active site. Histidine 181 serves as a coordination point for Fe cation.

The protein belongs to the polypeptide deformylase family. Fe(2+) serves as cofactor.

It carries out the reaction N-terminal N-formyl-L-methionyl-[peptide] + H2O = N-terminal L-methionyl-[peptide] + formate. Functionally, removes the formyl group from the N-terminal Met of newly synthesized proteins. Requires at least a dipeptide for an efficient rate of reaction. N-terminal L-methionine is a prerequisite for activity but the enzyme has broad specificity at other positions. The polypeptide is Peptide deformylase 1 (Streptomyces avermitilis (strain ATCC 31267 / DSM 46492 / JCM 5070 / NBRC 14893 / NCIMB 12804 / NRRL 8165 / MA-4680)).